The primary structure comprises 262 residues: NAC domain-containing protein 71 (262 aa).

Residues 6–160 (LPPGFRFHPT…AFALCRVVKK (155 aa)) form the NAC domain. Residues 107 to 166 (AGYRKTLVFYEGRAPLGDRTNWFMHEYRLCDIDDHSQKSPNFKGAFALCRVVKKNELKKN) mediate DNA binding.

It is found in the nucleus. Transcription factor involved in tissue reunion of wounded inflorescence stems. Required for the division of pith cells in the reunion process, which is dependent on polar-transported auxin and the wound-inducible hormones ethylene and jasmonate. Binds to the promoters of XTH19 and XTH20 to induce their expression via auxin signaling. XTH19 and XTH20 are involved in cell proliferation in the tissue reunion process of incised stems. Involved in hypocotyl graft union formation. Required for the auxin- mediated promotion of vascular tissue proliferation during hypocotyl graft attachment. In Arabidopsis thaliana (Mouse-ear cress), this protein is NAC domain-containing protein 71.